A 349-amino-acid chain; its full sequence is Ion-translocating oxidoreductase complex subunit D (349 aa).

The next 3 membrane-spanning stretches (helical) occupy residues 20–42 (VMQR…FGWG), 77–99 (SAML…WMIV), and 124–144 (AMAA…TWIA). An FMN phosphoryl threonine modification is found at threonine 185. Helical transmembrane passes span 212-232 (STGV…LVLL), 239-259 (WHIS…GFLL), 265-285 (ASPL…FIAT), 291-311 (ATSS…VYII), and 315-335 (GGYP…APFI).

This sequence belongs to the NqrB/RnfD family. The complex is composed of six subunits: RnfA, RnfB, RnfC, RnfD, RnfE and RnfG. It depends on FMN as a cofactor.

The protein localises to the cell inner membrane. In terms of biological role, part of a membrane-bound complex that couples electron transfer with translocation of ions across the membrane. The chain is Ion-translocating oxidoreductase complex subunit D from Shewanella baltica (strain OS223).